Here is a 272-residue protein sequence, read N- to C-terminus: Shikimate dehydrogenase (NADP(+)) (272 aa).

Residues 14-16 (SLS) and threonine 61 contribute to the shikimate site. Lysine 65 functions as the Proton acceptor in the catalytic mechanism. Aspartate 102 serves as a coordination point for shikimate. Residues 127 to 131 (GAGGA), 151 to 156 (NRTPSK), and leucine 215 each bind NADP(+). Tyrosine 217 provides a ligand contact to shikimate. An NADP(+)-binding site is contributed by glycine 239.

This sequence belongs to the shikimate dehydrogenase family. Homodimer.

The enzyme catalyses shikimate + NADP(+) = 3-dehydroshikimate + NADPH + H(+). The protein operates within metabolic intermediate biosynthesis; chorismate biosynthesis; chorismate from D-erythrose 4-phosphate and phosphoenolpyruvate: step 4/7. In terms of biological role, involved in the biosynthesis of the chorismate, which leads to the biosynthesis of aromatic amino acids. Catalyzes the reversible NADPH linked reduction of 3-dehydroshikimate (DHSA) to yield shikimate (SA). This chain is Shikimate dehydrogenase (NADP(+)), found in Coxiella burnetii (strain CbuG_Q212) (Coxiella burnetii (strain Q212)).